Reading from the N-terminus, the 277-residue chain is Protein OPG166 (277 aa).

N-linked (GlcNAc...) asparagine; by host glycosylation is found at asparagine 29 and asparagine 58. The next 5 helical transmembrane spans lie at 124 to 144 (TMLMFIFTGITLFLLFLEIAY), 156 to 176 (GILQVFGCVIAMIELCGAFLF), 186 to 206 (IIGLLMMTLPSIFLIITKVFS), 219 to 239 (LIIYYQLAGYILTVLGLGLSL), and 247 to 267 (LLLSGLGTIMVSEHFGLLFLV).

It belongs to the orthopoxvirus OPG166 protein family.

The protein localises to the host membrane. In terms of biological role, promotes, when overexpressed, the influx of extracellular Ca(2+), leading to membrane permeability and host cell necrosis. The chain is Protein OPG166 (OPG166) from Cynomys gunnisoni (Gunnison's prairie dog).